The sequence spans 489 residues: WRKY transcription factor 72B (489 aa).

Disordered stretches follow at residues methionine 1 to glutamate 100, glutamine 131 to aspartate 159, and aspartate 234 to valine 267. Basic and acidic residues-rich tracts occupy residues glycine 32–methionine 52 and threonine 83–glutamate 100. Residues histidine 84–lysine 132 adopt a coiled-coil conformation. A compositionally biased stretch (low complexity) spans serine 138–threonine 147. The WRKY DNA-binding region spans cysteine 273–proline 339. Disordered regions lie at residues leucine 356 to threonine 381 and threonine 427 to asparagine 454. Low complexity-rich tracts occupy residues threonine 371–threonine 381 and threonine 427–serine 438.

It belongs to the WRKY group II-b family.

The protein resides in the nucleus. Functionally, in association with WRKY72A, contributes to basal defense against root-knot nematodes (RKNs) and potato aphids, as well as Mi-1-mediated gene-for-gene resistance to these pests. Both WRKY72A and WRKY72B are not required for gene-for-gene resistance mediated by Pto, another tomato R gene. The polypeptide is WRKY transcription factor 72B (Solanum lycopersicum (Tomato)).